The primary structure comprises 376 residues: 1-acyl-sn-glycerol-3-phosphate acyltransferase gamma (376 aa).

Residues 1–124 are Cytoplasmic-facing; sequence MGLLAFLKTQ…LGSSKVLAKK (124 aa). Residues 96-101 carry the HXXXXD motif motif; that stretch reads HNFEID. The chain crosses the membrane as a helical span at residues 125-145; it reads ELLYVPLIGWTWYFLEIVFCK. Topologically, residues 146-316 are lumenal; that stretch reads RKWEEDRDTV…TLLNFLSWAT (171 aa). A helical transmembrane segment spans residues 317-339; the sequence is ILLSPLFSFVLGVFASGSPLLIL. Over 340–376 the chain is Cytoplasmic; it reads TFLGFVGAASFGVRRLIGVTEIEKGSSYGNQEFKKKE.

The protein belongs to the 1-acyl-sn-glycerol-3-phosphate acyltransferase family. In terms of tissue distribution, widely expressed with highest levels in testis, pancreas and kidney, followed by spleen, lung, adipose tissue and liver.

Its subcellular location is the endoplasmic reticulum membrane. It is found in the nucleus envelope. It carries out the reaction a 1-acyl-sn-glycero-3-phosphate + an acyl-CoA = a 1,2-diacyl-sn-glycero-3-phosphate + CoA. It catalyses the reaction pentadecanoyl-CoA + 1-(9Z-octadecenoyl)-sn-glycero-3-phosphate = 1-(9Z)-octadecenoyl-2-pentadecanoyl-sn-glycero-3-phosphate + CoA. The catalysed reaction is heptadecanoyl-CoA + 1-(9Z-octadecenoyl)-sn-glycero-3-phosphate = 1-(9Z)-octadecenoyl-2-heptadecanoyl-sn-glycero-3-phosphate + CoA. The enzyme catalyses 1-(9Z-octadecenoyl)-sn-glycero-3-phosphate + octadecanoyl-CoA = 1-(9Z-octadecenoyl)-2-octadecanoyl-sn-glycero-3-phosphate + CoA. It carries out the reaction nonadecanoyl-CoA + 1-(9Z-octadecenoyl)-sn-glycero-3-phosphate = 1-(9Z)-octadecenoyl-2-nonadecanoyl-sn-glycero-3-phosphate + CoA. It catalyses the reaction 1-(9Z-octadecenoyl)-sn-glycero-3-phosphate + (5Z,8Z,11Z,14Z)-eicosatetraenoyl-CoA = 1-(9Z)-octadecenoyl-2-(5Z,8Z,11Z,14Z)-eicosatetraenoyl-sn-glycero-3-phosphate + CoA. The catalysed reaction is 1-(9Z-octadecenoyl)-sn-glycero-3-phosphate + (9Z)-octadecenoyl-CoA = 1,2-di-(9Z-octadecenoyl)-sn-glycero-3-phosphate + CoA. The enzyme catalyses 1-(9Z-octadecenoyl)-sn-glycero-3-phosphate + (9Z,12Z)-octadecadienoyl-CoA = 1-(9Z)-octadecenoyl-2-(9Z,12Z)-octadecadienoyl-sn-glycero-3-phosphate + CoA. It carries out the reaction 1-(9Z-octadecenoyl)-sn-glycero-3-phosphocholine + (5Z,8Z,11Z,14Z)-eicosatetraenoyl-CoA = 1-(9Z)-octadecenoyl-2-(5Z,8Z,11Z,14Z)-icosatetraenoyl-sn-glycero-3-phosphocholine + CoA. It catalyses the reaction 1-(9Z-octadecenoyl)-sn-glycero-3-phospho-(1D-myo-inositol) + (5Z,8Z,11Z,14Z)-eicosatetraenoyl-CoA = 1-(9Z-octadecenoyl)-2-(5Z,8Z,11Z,14Z-eicosatetraenoyl)-sn-glycero-3-phospho-1D-myo-inositol + CoA. The catalysed reaction is 1-(9Z-octadecenoyl)-sn-glycero-3-phospho-L-serine + (5Z,8Z,11Z,14Z)-eicosatetraenoyl-CoA = 1-(9Z-octadecenoyl)-2-(5Z,8Z,11Z,14Z-eicosatetraenoyl)-sn-glycero-3-phospho-L-serine + CoA. The enzyme catalyses 1-hexadecanoyl-sn-glycero-3-phosphate + (9Z)-octadecenoyl-CoA = 1-hexadecanoyl-2-(9Z-octadecenoyl)-sn-glycero-3-phosphate + CoA. It carries out the reaction 1-hexadecanoyl-sn-glycero-3-phosphate + (5Z,8Z,11Z,14Z)-eicosatetraenoyl-CoA = 1-hexadecanoyl-2-(5Z,8Z,11Z,14Z-eicosatetraenoyl)-sn-glycero-3-phosphate + CoA. It catalyses the reaction 1-heptadecanoyl-sn-glycero-3-phosphate + (5Z,8Z,11Z,14Z)-eicosatetraenoyl-CoA = 1-heptadecanoyl-2-(5Z,8Z,11Z,14Z)-eicosatetraenoyl-sn-glycero-3-phosphate + CoA. The catalysed reaction is 1-octadecanoyl-sn-glycero-3-phosphate + (9Z)-octadecenoyl-CoA = 1-octadecanoyl-2-(9Z-octadecenoyl)-sn-glycero-3-phosphate + CoA. The enzyme catalyses 1-octadecanoyl-sn-glycero-3-phosphate + (5Z,8Z,11Z,14Z)-eicosatetraenoyl-CoA = 1-octadecanoyl-2-(5Z,8Z,11Z,14Z-eicosatetraenoyl)-sn-glycero-3-phosphate + CoA. It carries out the reaction 1-(9Z-octadecenoyl)-sn-glycero-3-phosphate + hexadecanoyl-CoA = 1-hexadecanoyl-2-(9Z-octadecenoyl)-sn-glycero-3-phosphate + CoA. It catalyses the reaction 1-O-(9Z-octadecenyl)-sn-glycero-3-phosphate + (5Z,8Z,11Z,14Z)-eicosatetraenoyl-CoA = 1-O-(9Z-octadecenyl)-2-(5Z,8Z,11Z,14Z-eicosatetraenoyl)-sn-glycero-3-phosphate + CoA. The catalysed reaction is a 1-acyl-sn-glycero-3-phospho-(1D-myo-inositol) + (5Z,8Z,11Z,14Z)-eicosatetraenoyl-CoA = a 1-acyl-2-(5Z,8Z,11Z,14Z-eicosatetraenoyl)-sn-glycero-3-phospho-(1D-myo-inositol) + CoA. It participates in phospholipid metabolism; CDP-diacylglycerol biosynthesis; CDP-diacylglycerol from sn-glycerol 3-phosphate: step 2/3. Its function is as follows. Converts 1-acyl-sn-glycerol-3-phosphate (lysophosphatidic acid or LPA) into 1,2-diacyl-sn-glycerol-3-phosphate (phosphatidic acid or PA) by incorporating an acyl moiety at the sn-2 position of the glycerol backbone. Acts on LPA containing saturated or unsaturated fatty acids C16:0-C20:4 at the sn-1 position using C18:1, C20:4 or C18:2-CoA as the acyl donor. Also acts on lysophosphatidylcholine, lysophosphatidylinositol and lysophosphatidylserine using C18:1 or C20:4-CoA. Has a preference for arachidonoyl-CoA as a donor. Also has a modest lysophosphatidylinositol acyltransferase (LPIAT) activity, converts lysophosphatidylinositol (LPI) into phosphatidylinositol. This Homo sapiens (Human) protein is 1-acyl-sn-glycerol-3-phosphate acyltransferase gamma (AGPAT3).